The sequence spans 104 residues: uncharacterized protein (104 aa).

Residues 62–92 (SSPAASSHPRKRGKEKKERTPTERLAAPARK) form a disordered region.

This is an uncharacterized protein from Human adenovirus B serotype 7 (HAdV-7).